Here is a 792-residue protein sequence, read N- to C-terminus: MDKTTTSDLVLDNDNIGSNAGSAQEPLTTNGKTSGVRNRYKQTVKRGRKGSQISPSKTYPLRSSHSNVRVLRSASKKKNETPIVPTNDNTAVQRVAKKRKRSKPLRPAPSRVLRSTSEKKNKAHNELLNDGAGVQPAEKKRKVGRPPKGGTPKDDYLMIRKRVRYVLNRMNYEQSLIQAYASEGWKGQSLEKIRPEKELERAKVEILRCKSRIREAFRNLDSLLSEGKLDESMFDSAGEISSEDIFCAACGSKDVTLKNDIILCDGICDRGFHQYCLNPPLLAEDIPQGDEGWLCPACDCKIDCIDVLNELQGVKLSIHDSWEKVFPEAASFLNGSKQIDASDLPSDDSADNDYDPTLAQGHKVDEEKSSGEDGGEGLDSDDSSSEDSESSEKEKSKTSQNGRTVDDLGLPSEDSEDGDFDPAGPDSDKEQNDESNSDQSDESDFTSDSDDFCAEIAKSCGQDEISGPSSSQIRTVDRTDGSGFDGEPNAENSNLAFMETELEQDMVLPISSKRQVERLDYKKLYNEAYGKASSDSSDDEEWYGNSTPEKGNLEDSETDSLAESPQGGKGFSRRAPVRYHNNEHTPQNVRPGGSVSDQQTEVLCSNSNGSTAKNRHFGPAINQKLKAHFKEDPYPSRATKENLAQELGLTFNQVTKWFSSTRHYARVAATKKENNIENHTAENNNNTNTVDSIQLRGSNDIVSVDRNDMVSEERTGQSNLNEGTPLRSDTSCGQSVAVTPMVHPENQGNDSSSNVRTPNAKSAEKLIPGLENSDEARRKAVQRELRKMKTGR.

The disordered stretch occupies residues 1–154 (MDKTTTSDLV…RPPKGGTPKD (154 aa)). Residues 15–36 (NIGSNAGSAQEPLTTNGKTSGV) show a composition bias toward polar residues. The segment covering 38–49 (NRYKQTVKRGRK) has biased composition (basic residues). The segment covering 51–67 (SQISPSKTYPLRSSHSN) has biased composition (polar residues). Over residues 95–104 (VAKKRKRSKP) the composition is skewed to basic residues. Positions 116–127 (TSEKKNKAHNEL) are enriched in basic and acidic residues. The segment at 244 to 301 (DIFCAACGSKDVTLKNDIILCDGICDRGFHQYCLNPPLLAEDIPQGDEGWLCPACDCK) adopts a PHD-type zinc-finger fold. Disordered regions lie at residues 338 to 495 (QIDA…NSNL) and 529 to 599 (YGKA…SDQQ). The span at 345–354 (PSDDSADNDY) shows a compositional bias: acidic residues. A compositionally biased stretch (basic and acidic residues) spans 362-371 (HKVDEEKSSG). Acidic residues-rich tracts occupy residues 373-389 (DGGEGLDSDDSSSEDSE) and 433-453 (DESNSDQSDESDFTSDSDDFC). A DNA-binding region (homeobox) is located at residues 610–669 (STAKNRHFGPAINQKLKAHFKEDPYPSRATKENLAQELGLTFNQVTKWFSSTRHYARVAA). 2 disordered regions span residues 677–697 (ENHTAENNNNTNTVDSIQLRG) and 711–792 (SEER…KTGR). 2 stretches are compositionally biased toward polar residues: residues 716-737 (GQSNLNEGTPLRSDTSCGQSVA) and 746-760 (NQGNDSSSNVRTPNA). Residues 774–792 (DEARRKAVQRELRKMKTGR) show a composition bias toward basic and acidic residues.

It belongs to the PHD-associated homeobox family. Expressed in roots, leaves, stems, panicle and seeds.

It is found in the nucleus. In terms of biological role, transcriptional repressor involved in the regulation of gibberrelin (GA) signaling. Binds to the 5'-GATC-3' motif of HD16/EL1 promoter. Functions as a positive regulator of GA signaling by suppressing the expression of HD16/EL1, a negative regulator of GA signaling. The sequence is that of Homeobox protein HAZ1 from Oryza sativa subsp. japonica (Rice).